A 799-amino-acid chain; its full sequence is Elongation factor G, mitochondrial (799 aa).

The N-terminal 24 residues, 1 to 24 (MRCPSLARLPHRAVSGLTRTPVRF), are a transit peptide targeting the mitochondrion. The region spanning 97–384 (SRVRNIGIAA…GVIDYLPNPS (288 aa)) is the tr-type G domain. GTP-binding positions include 106–113 (AHIDSGKT), 182–186 (DTPGH), and 236–239 (NKMD).

It belongs to the TRAFAC class translation factor GTPase superfamily. Classic translation factor GTPase family. EF-G/EF-2 subfamily.

The protein localises to the mitochondrion. The protein operates within protein biosynthesis; polypeptide chain elongation. Its function is as follows. Mitochondrial GTPase that catalyzes the GTP-dependent ribosomal translocation step during translation elongation. During this step, the ribosome changes from the pre-translocational (PRE) to the post-translocational (POST) state as the newly formed A-site-bound peptidyl-tRNA and P-site-bound deacylated tRNA move to the P and E sites, respectively. Catalyzes the coordinated movement of the two tRNA molecules, the mRNA and conformational changes in the ribosome. The sequence is that of Elongation factor G, mitochondrial (mef1) from Emericella nidulans (strain FGSC A4 / ATCC 38163 / CBS 112.46 / NRRL 194 / M139) (Aspergillus nidulans).